The sequence spans 264 residues: Teichoic acids export ATP-binding protein TagH (264 aa).

An ABC transporter domain is found at 5-243 (VNIKNVTKEY…YEAFLNDFKK (239 aa)). 57–64 (GINGSGKS) lines the ATP pocket.

This sequence belongs to the ABC transporter superfamily. Teichoic acids exporter (TC 3.A.1.104.1) family. The complex is composed of two ATP-binding proteins (TagH) and two transmembrane proteins (TagG).

Its subcellular location is the cell membrane. It catalyses the reaction ATP + H2O + teichoic acidSide 1 = ADP + phosphate + teichoic acidSide 2.. Its function is as follows. Part of the ABC transporter complex TagGH involved in teichoic acids export. Responsible for energy coupling to the transport system. This Staphylococcus aureus (strain USA300) protein is Teichoic acids export ATP-binding protein TagH.